Here is a 122-residue protein sequence, read N- to C-terminus: MYVQEHRLWGLMDKPHSAPCLMSLSLSFLICNKGRNAIRVQQSTDERMDAMLLRQCPTQGTRKNHESNSSLHHVPNWIFHSTIIPPNKGSKRCLRKVDWLLPRAGGVGGKRGVTADGDRVSF.

Belongs to the FAM223 family.

The protein is Protein FAM223B (FAM223B) of Homo sapiens (Human).